We begin with the raw amino-acid sequence, 445 residues long: DNA polymerase IV (445 aa).

The UmuC domain occupies 49-229 (LAHVDCDAFY…KPVGMIWGVG (181 aa)). The Mg(2+) site is built by D53 and D146. Residue E147 is part of the active site.

Belongs to the DNA polymerase type-Y family. In terms of assembly, monomer. The cofactor is Mg(2+).

Its subcellular location is the cytoplasm. The enzyme catalyses DNA(n) + a 2'-deoxyribonucleoside 5'-triphosphate = DNA(n+1) + diphosphate. Functionally, poorly processive, error-prone DNA polymerase involved in untargeted mutagenesis. Copies undamaged DNA at stalled replication forks, which arise in vivo from mismatched or misaligned primer ends. These misaligned primers can be extended by PolIV. Exhibits no 3'-5' exonuclease (proofreading) activity. May be involved in translesional synthesis, in conjunction with the beta clamp from PolIII. The protein is DNA polymerase IV of Brucella melitensis biotype 1 (strain ATCC 23456 / CCUG 17765 / NCTC 10094 / 16M).